The chain runs to 600 residues: Cytidine monophosphate-N-acetylneuraminic acid hydroxylase (600 aa).

Residues Leu-9–Leu-107 enclose the Rieske domain. [2Fe-2S] cluster contacts are provided by Cys-49, His-51, Cys-70, and His-73.

This sequence belongs to the CMP-Neu5Ac hydroxylase family. The cofactor is [2Fe-2S] cluster.

It is found in the cytoplasm. The catalysed reaction is CMP-N-acetyl-beta-neuraminate + 2 Fe(II)-[cytochrome b5] + O2 + 2 H(+) = CMP-N-glycoloyl-beta-neuraminate + 2 Fe(III)-[cytochrome b5] + H2O. The protein operates within amino-sugar metabolism; N-acetylneuraminate metabolism. Sialic acids are components of carbohydrate chains of glycoconjugates and are involved in cell-cell recognition and cell-pathogen interactions. Catalyzes the conversion of CMP-N-acetylneuraminic acid (CMP-Neu5Ac) into its hydroxylated derivative CMP-N-glycolylneuraminic acid (CMP-Neu5Gc), a sialic acid abundantly expressed at the surface of many cells. The chain is Cytidine monophosphate-N-acetylneuraminic acid hydroxylase (CMAH) from Gorilla gorilla gorilla (Western lowland gorilla).